Consider the following 648-residue polypeptide: Zinc finger protein grt1 (648 aa).

Residues A13–Y42 constitute a DNA-binding region (zn(2)-C6 fungal-type).

As to quaternary structure, monomer.

It localises to the nucleus. Functionally, may be involved in the facilitation of anaphase progression in mitosis. The sequence is that of Zinc finger protein grt1 (grt1) from Schizosaccharomyces pombe (strain 972 / ATCC 24843) (Fission yeast).